A 168-amino-acid chain; its full sequence is Photosystem I assembly protein Ycf3 (168 aa).

3 TPR repeats span residues 35-68 (AFTY…EIDP), 72-105 (SYIL…NPFL), and 120-153 (GEQA…TPGN).

Belongs to the Ycf3 family.

It is found in the plastid. The protein resides in the chloroplast thylakoid membrane. Essential for the assembly of the photosystem I (PSI) complex. May act as a chaperone-like factor to guide the assembly of the PSI subunits. In Phaseolus vulgaris (Kidney bean), this protein is Photosystem I assembly protein Ycf3.